The primary structure comprises 1097 residues: Mitochondrial distribution and morphology protein 34 (1097 aa).

The region spanning 1 to 198 (MSFNFKWPTF…LPGIIHRLSQ (198 aa)) is the SMP-LTD domain. Disordered stretches follow at residues 204-305 (EAKS…PLHS), 317-343 (AAFPDIENYDPTYGLRPDDLPTHSGFS), 390-427 (QSDDEGSEAEQSQDAHSSSHDGKHDEGDATTDSDLDAV), 480-520 (DDQP…TSSL), 556-600 (PEVD…SSRT), 645-675 (LDAERSSVSGSDSRRGLTNPTSRESSYRDLS), 716-817 (GQNA…SPGV), and 923-1097 (GSSA…AIRE). Positions 205–229 (AKSEKDKVKQKAEAEEPPARSREPT) are enriched in basic and acidic residues. The segment covering 252 to 263 (RKSHSKAKKHSR) has biased composition (basic residues). Residues 274-283 (SPCQSPQRPR) are compositionally biased toward low complexity. Over residues 284–293 (QSPRRPRHVA) the composition is skewed to basic residues. Positions 406 to 416 (SSSHDGKHDEG) are enriched in basic and acidic residues. Low complexity-rich tracts occupy residues 508–519 (SSRSDRSACTSS) and 572–586 (GGTPSTRTGTTRFGS). The segment covering 662–675 (TNPTSRESSYRDLS) has biased composition (polar residues). Over residues 759–779 (GMSATPARTRASAAASARSRP) the composition is skewed to low complexity. Over residues 784 to 796 (YATSPPGDSSGWQ) the composition is skewed to polar residues. Low complexity predominate over residues 923–943 (GSSAASGTGTTSGSSQTGANA). Polar residues predominate over residues 1004 to 1024 (SNKPNNTSTGQGEDSQDNSAA). Low complexity predominate over residues 1045–1059 (ASGSSASSAITDSSS).

The protein belongs to the MDM34 family. In terms of assembly, component of the ER-mitochondria encounter structure (ERMES) or MDM complex, composed of MMM1, MDM10, MDM12 and MDM34.

The protein resides in the mitochondrion outer membrane. Functionally, component of the ERMES/MDM complex, which serves as a molecular tether to connect the endoplasmic reticulum (ER) and mitochondria. Components of this complex are involved in the control of mitochondrial shape and protein biogenesis, and function in nonvesicular lipid trafficking between the ER and mitochondria. MDM34 is required for the interaction of the ER-resident membrane protein MMM1 and the outer mitochondrial membrane-resident beta-barrel protein MDM10. The chain is Mitochondrial distribution and morphology protein 34 from Mycosarcoma maydis (Corn smut fungus).